A 625-amino-acid polypeptide reads, in one-letter code: tRNA uridine 5-carboxymethylaminomethyl modification enzyme MnmG (625 aa).

Residues 13-18, valine 125, and serine 182 contribute to the FAD site; that span reads GGGHAG. 276-290 lines the NAD(+) pocket; the sequence is GPRYCPSIEDKITRF. Glutamine 373 serves as a coordination point for FAD.

This sequence belongs to the MnmG family. As to quaternary structure, homodimer. Heterotetramer of two MnmE and two MnmG subunits. Requires FAD as cofactor.

The protein resides in the cytoplasm. Its function is as follows. NAD-binding protein involved in the addition of a carboxymethylaminomethyl (cmnm) group at the wobble position (U34) of certain tRNAs, forming tRNA-cmnm(5)s(2)U34. The chain is tRNA uridine 5-carboxymethylaminomethyl modification enzyme MnmG from Lactococcus lactis subsp. cremoris (strain MG1363).